Consider the following 238-residue polypeptide: UPF0758 protein Dtpsy_2777 (238 aa).

The region spanning 116–238 (VFDSPQAVQH…ALSMAEQGLV (123 aa)) is the MPN domain. Zn(2+) contacts are provided by histidine 187, histidine 189, and aspartate 200. Residues 187 to 200 (HNHPSGSVQPSRAD) carry the JAMM motif motif.

This sequence belongs to the UPF0758 family.

In Acidovorax ebreus (strain TPSY) (Diaphorobacter sp. (strain TPSY)), this protein is UPF0758 protein Dtpsy_2777.